The following is a 565-amino-acid chain: Sulfite reductase [NADPH] hemoprotein beta-component (565 aa).

Cys-429, Cys-435, Cys-474, and Cys-478 together coordinate [4Fe-4S] cluster. Cys-478 lines the siroheme pocket.

Belongs to the nitrite and sulfite reductase 4Fe-4S domain family. Alpha(8)-beta(8). The alpha component is a flavoprotein, the beta component is a hemoprotein. Requires siroheme as cofactor. It depends on [4Fe-4S] cluster as a cofactor.

The enzyme catalyses hydrogen sulfide + 3 NADP(+) + 3 H2O = sulfite + 3 NADPH + 4 H(+). Its pathway is sulfur metabolism; hydrogen sulfide biosynthesis; hydrogen sulfide from sulfite (NADPH route): step 1/1. Component of the sulfite reductase complex that catalyzes the 6-electron reduction of sulfite to sulfide. This is one of several activities required for the biosynthesis of L-cysteine from sulfate. This Pseudoalteromonas translucida (strain TAC 125) protein is Sulfite reductase [NADPH] hemoprotein beta-component.